A 378-amino-acid chain; its full sequence is 1-acyl-sn-glycerol-3-phosphate acyltransferase delta (378 aa).

A helical transmembrane segment spans residues 11–31 (FLCHLVFCYVFIASGLIVNAI). The HXXXXD motif signature appears at 96–101 (HKFEID). Helical transmembrane passes span 125-145 (ELAY…IFCT), 311-331 (WLFW…SMVS), and 338-358 (LASL…MIGV).

Belongs to the 1-acyl-sn-glycerol-3-phosphate acyltransferase family.

Its subcellular location is the endoplasmic reticulum membrane. The enzyme catalyses a 1-acyl-sn-glycero-3-phosphate + an acyl-CoA = a 1,2-diacyl-sn-glycero-3-phosphate + CoA. It carries out the reaction (4Z,7Z,10Z,13Z,16Z,19Z)-docosahexaenoyl-CoA + 1-hexadecanoyl-sn-glycero-3-phosphate = 1-hexadecanoyl-2-(4Z,7Z,10Z,13Z,16Z,19Z-docosahexaenoyl)-sn-glycero-3-phosphate + CoA. The catalysed reaction is 1-octadecanoyl-sn-glycero-3-phosphate + (9Z,12Z)-octadecadienoyl-CoA = 1-octadecanoyl-2-(9Z,12Z-octadecadienoyl)-sn-glycero-3-phosphate + CoA. It catalyses the reaction 1-octadecanoyl-sn-glycero-3-phosphate + (4Z,7Z,10Z,13Z,16Z,19Z)-docosahexaenoyl-CoA = 1-octadecanoyl-2-(4Z,7Z,10Z,13Z,16Z,19Z-docosahexaenoyl)-sn-glycero-3-phosphate + CoA. The enzyme catalyses (4Z,7Z,10Z,13Z,16Z,19Z)-docosahexaenoyl-CoA + 1-(9Z-octadecenoyl)-sn-glycero-3-phosphate = 1-(9Z-octadecenoyl)-2-(4Z,7Z,10Z,13Z,16Z,19Z-docosahexaenoyl)-sn-glycero-3-phosphate + CoA. It participates in phospholipid metabolism; CDP-diacylglycerol biosynthesis; CDP-diacylglycerol from sn-glycerol 3-phosphate: step 2/3. In terms of biological role, converts 1-acyl-sn-glycerol-3-phosphate (lysophosphatidic acid or LPA) into 1,2-diacyl-sn-glycerol-3-phosphate (phosphatidic acid or PA) by incorporating an acyl moiety at the sn-2 position of the glycerol backbone. Exhibits high acyl-CoA specificity for polyunsaturated fatty acyl-CoA, especially docosahexaenoyl-CoA (22:6-CoA, DHA-CoA). This chain is 1-acyl-sn-glycerol-3-phosphate acyltransferase delta (Agpat4), found in Rattus norvegicus (Rat).